Consider the following 215-residue polypeptide: Cytochrome b6 (215 aa).

Residues 32–52 form a helical membrane-spanning segment; that stretch reads IFYCLGGITLTCFLVQVATGF. C35 contacts heme c. Positions 86 and 100 each coordinate heme b. A run of 3 helical transmembrane segments spans residues 90-110, 116-136, and 186-206; these read ASMMVLMMILHVFRVYLTGGF, LTWVTGVVLGVLTASFGVTGY, and LHTFVLPLLTAVFMLMHFLMI. Residues H187 and H202 each coordinate heme b.

It belongs to the cytochrome b family. PetB subfamily. As to quaternary structure, the 4 large subunits of the cytochrome b6-f complex are cytochrome b6, subunit IV (17 kDa polypeptide, PetD), cytochrome f and the Rieske protein, while the 4 small subunits are PetG, PetL, PetM and PetN. The complex functions as a dimer. Heme b is required as a cofactor. Requires heme c as cofactor.

It is found in the plastid. Its subcellular location is the chloroplast thylakoid membrane. In terms of biological role, component of the cytochrome b6-f complex, which mediates electron transfer between photosystem II (PSII) and photosystem I (PSI), cyclic electron flow around PSI, and state transitions. This chain is Cytochrome b6, found in Arabidopsis thaliana (Mouse-ear cress).